A 214-amino-acid polypeptide reads, in one-letter code: Thiamine-phosphate synthase (214 aa).

4-amino-2-methyl-5-(diphosphooxymethyl)pyrimidine is bound by residues 39-43 (QYRFK) and N71. Mg(2+) is bound by residues D72 and D91. Residue S110 coordinates 4-amino-2-methyl-5-(diphosphooxymethyl)pyrimidine. Residue 136–138 (TKT) coordinates 2-[(2R,5Z)-2-carboxy-4-methylthiazol-5(2H)-ylidene]ethyl phosphate. Position 139 (K139) interacts with 4-amino-2-methyl-5-(diphosphooxymethyl)pyrimidine. 2-[(2R,5Z)-2-carboxy-4-methylthiazol-5(2H)-ylidene]ethyl phosphate-binding positions include G166 and 186-187 (VS).

This sequence belongs to the thiamine-phosphate synthase family. The cofactor is Mg(2+).

The catalysed reaction is 2-[(2R,5Z)-2-carboxy-4-methylthiazol-5(2H)-ylidene]ethyl phosphate + 4-amino-2-methyl-5-(diphosphooxymethyl)pyrimidine + 2 H(+) = thiamine phosphate + CO2 + diphosphate. It carries out the reaction 2-(2-carboxy-4-methylthiazol-5-yl)ethyl phosphate + 4-amino-2-methyl-5-(diphosphooxymethyl)pyrimidine + 2 H(+) = thiamine phosphate + CO2 + diphosphate. The enzyme catalyses 4-methyl-5-(2-phosphooxyethyl)-thiazole + 4-amino-2-methyl-5-(diphosphooxymethyl)pyrimidine + H(+) = thiamine phosphate + diphosphate. It participates in cofactor biosynthesis; thiamine diphosphate biosynthesis; thiamine phosphate from 4-amino-2-methyl-5-diphosphomethylpyrimidine and 4-methyl-5-(2-phosphoethyl)-thiazole: step 1/1. Condenses 4-methyl-5-(beta-hydroxyethyl)thiazole monophosphate (THZ-P) and 2-methyl-4-amino-5-hydroxymethyl pyrimidine pyrophosphate (HMP-PP) to form thiamine monophosphate (TMP). The polypeptide is Thiamine-phosphate synthase (Hydrogenobaculum sp. (strain Y04AAS1)).